The chain runs to 494 residues: 3-octaprenyl-4-hydroxybenzoate carboxy-lyase (494 aa).

Asn-172 lines the Mn(2+) pocket. Prenylated FMN-binding positions include 175–177, 189–191, and 194–195; these read IYR, RWL, and RG. Position 238 (Glu-238) interacts with Mn(2+). The active-site Proton donor is the Asp-287.

This sequence belongs to the UbiD family. As to quaternary structure, homohexamer. The cofactor is prenylated FMN. Mn(2+) serves as cofactor.

It is found in the cell membrane. The catalysed reaction is a 4-hydroxy-3-(all-trans-polyprenyl)benzoate + H(+) = a 2-(all-trans-polyprenyl)phenol + CO2. It functions in the pathway cofactor biosynthesis; ubiquinone biosynthesis. Functionally, catalyzes the decarboxylation of 3-octaprenyl-4-hydroxy benzoate to 2-octaprenylphenol, an intermediate step in ubiquinone biosynthesis. The chain is 3-octaprenyl-4-hydroxybenzoate carboxy-lyase from Shigella flexneri serotype 5b (strain 8401).